The sequence spans 658 residues: Endoplasmic reticulum mannosyl-oligosaccharide 1,2-alpha-mannosidase (658 aa).

Topologically, residues 1–50 (MYPPPAPPPAPHRDFISVTLSLGESYDNSKSRRRRSCWRKWKQLSRLQRN) are cytoplasmic. A helical; Signal-anchor for type II membrane protein transmembrane segment spans residues 51–71 (VILFVLGFLILCGFLYSLHTA). The Lumenal segment spans residues 72-658 (DQWKALSGRP…AHPLPIWAPA (587 aa)). Ser-102 carries the phosphoserine modification. The tract at residues 123 to 142 (GPPHLQIRPPNTVSKDGMQD) is disordered. Glu-289 serves as the catalytic Proton donor. The active site involves Asp-422. Cys-486 and Cys-515 are joined by a disulfide. Glu-529 acts as the Proton donor in catalysis. Glu-558 is an active-site residue. Thr-647 serves as a coordination point for Ca(2+).

This sequence belongs to the glycosyl hydrolase 47 family. Requires Ca(2+) as cofactor.

It is found in the endoplasmic reticulum membrane. It carries out the reaction N(4)-(alpha-D-Man-(1-&gt;2)-alpha-D-Man-(1-&gt;2)-alpha-D-Man-(1-&gt;3)-[alpha-D-Man-(1-&gt;2)-alpha-D-Man-(1-&gt;3)-[alpha-D-Man-(1-&gt;2)-alpha-D-Man-(1-&gt;6)]-alpha-D-Man-(1-&gt;6)]-beta-D-Man-(1-&gt;4)-beta-D-GlcNAc-(1-&gt;4)-beta-D-GlcNAc)-L-asparaginyl-[protein] (N-glucan mannose isomer 9A1,2,3B1,2,3) + 4 H2O = N(4)-(alpha-D-Man-(1-&gt;3)-[alpha-D-Man-(1-&gt;3)-[alpha-D-Man-(1-&gt;6)]-alpha-D-Man-(1-&gt;6)]-beta-D-Man-(1-&gt;4)-beta-D-GlcNAc-(1-&gt;4)-beta-D-GlcNAc)-L-asparaginyl-[protein] (N-glucan mannose isomer 5A1,2) + 4 beta-D-mannose. The enzyme catalyses N(4)-(alpha-D-Man-(1-&gt;2)-alpha-D-Man-(1-&gt;2)-alpha-D-Man-(1-&gt;3)-[alpha-D-Man-(1-&gt;3)-[alpha-D-Man-(1-&gt;2)-alpha-D-Man-(1-&gt;6)]-alpha-D-Man-(1-&gt;6)]-beta-D-Man-(1-&gt;4)-beta-D-GlcNAc-(1-&gt;4)-beta-D-GlcNAc)-L-asparaginyl-[protein] (N-glucan mannose isomer 8A1,2,3B1,3) + 3 H2O = N(4)-(alpha-D-Man-(1-&gt;3)-[alpha-D-Man-(1-&gt;3)-[alpha-D-Man-(1-&gt;6)]-alpha-D-Man-(1-&gt;6)]-beta-D-Man-(1-&gt;4)-beta-D-GlcNAc-(1-&gt;4)-beta-D-GlcNAc)-L-asparaginyl-[protein] (N-glucan mannose isomer 5A1,2) + 3 beta-D-mannose. It participates in protein modification; protein glycosylation. Involved in glycoprotein quality control targeting of misfolded glycoproteins for degradation. It primarily trims a single alpha-1,2-linked mannose residue from Man(9)GlcNAc(2) to produce Man(8)GlcNAc(2), but at high enzyme concentrations, as found in the ER quality control compartment (ERQC), it further trims the carbohydrates to Man(5-6)GlcNAc(2). This chain is Endoplasmic reticulum mannosyl-oligosaccharide 1,2-alpha-mannosidase (Man1b1), found in Mus musculus (Mouse).